Here is a 551-residue protein sequence, read N- to C-terminus: uncharacterized protein (551 aa).

Belongs to the GSP E family.

This is an uncharacterized protein from Methanocaldococcus jannaschii (strain ATCC 43067 / DSM 2661 / JAL-1 / JCM 10045 / NBRC 100440) (Methanococcus jannaschii).